The sequence spans 219 residues: Protein-L-isoaspartate O-methyltransferase (219 aa).

The active site involves Ser-64.

It belongs to the methyltransferase superfamily. L-isoaspartyl/D-aspartyl protein methyltransferase family.

The protein localises to the cytoplasm. It carries out the reaction [protein]-L-isoaspartate + S-adenosyl-L-methionine = [protein]-L-isoaspartate alpha-methyl ester + S-adenosyl-L-homocysteine. Catalyzes the methyl esterification of L-isoaspartyl residues in peptides and proteins that result from spontaneous decomposition of normal L-aspartyl and L-asparaginyl residues. It plays a role in the repair and/or degradation of damaged proteins. The sequence is that of Protein-L-isoaspartate O-methyltransferase from Chlorobaculum parvum (strain DSM 263 / NCIMB 8327) (Chlorobium vibrioforme subsp. thiosulfatophilum).